The following is a 122-amino-acid chain: Defensin-like protein 181 (122 aa).

The N-terminal stretch at 1–26 (MERIPSLASLVSLLIIFATVVNQTRA) is a signal peptide. 8 disulfide bridges follow: C29-C70, C36-C55, C39-C64, C43-C66, C76-C122, C87-C107, C92-C116, and C96-C118.

This sequence belongs to the DEFL family.

It localises to the secreted. In terms of biological role, confers broad-spectrum resistance to pathogens. The protein is Defensin-like protein 181 (PDF3.1) of Arabidopsis thaliana (Mouse-ear cress).